A 99-amino-acid chain; its full sequence is UPF0125 protein BU253 (99 aa).

It belongs to the UPF0125 (RnfH) family.

In Buchnera aphidicola subsp. Acyrthosiphon pisum (strain APS) (Acyrthosiphon pisum symbiotic bacterium), this protein is UPF0125 protein BU253.